Consider the following 207-residue polypeptide: Ribonuclease HII (207 aa).

The 190-residue stretch at 18–207 folds into the RNase H type-2 domain; it reads GLVAGVDEAG…VAEVLREALP (190 aa). Residues aspartate 24, glutamate 25, and aspartate 116 each contribute to the a divalent metal cation site.

Belongs to the RNase HII family. Mn(2+) is required as a cofactor. The cofactor is Mg(2+).

It localises to the cytoplasm. It catalyses the reaction Endonucleolytic cleavage to 5'-phosphomonoester.. Endonuclease that specifically degrades the RNA of RNA-DNA hybrids. This is Ribonuclease HII from Albidiferax ferrireducens (strain ATCC BAA-621 / DSM 15236 / T118) (Rhodoferax ferrireducens).